The following is a 166-amino-acid chain: Transcription antitermination protein NusB (166 aa).

A compositionally biased stretch (basic and acidic residues) spans 1-18 (MISDESDRFNPRDPKPAD). The segment at 1 to 30 (MISDESDRFNPRDPKPADAGKPSKSAKRRE) is disordered.

This sequence belongs to the NusB family.

Its function is as follows. Involved in transcription antitermination. Required for transcription of ribosomal RNA (rRNA) genes. Binds specifically to the boxA antiterminator sequence of the ribosomal RNA (rrn) operons. This is Transcription antitermination protein NusB from Pseudomonas entomophila (strain L48).